A 425-amino-acid chain; its full sequence is WD repeat-containing protein JIP5 (425 aa).

WD repeat units follow at residues 9 to 48 (QLDS…SDDS), 71 to 110 (RHKG…VTAK), 117 to 158 (LANG…AKSA), 219 to 262 (ELLS…DQDE), and 321 to 358 (LRQE…DVPE). A disordered region spans residues 354 to 425 (QDVPEDDEDE…HGILHFSGLA (72 aa)). Acidic residues-rich tracts occupy residues 356–368 (VPED…EEEA) and 378–396 (SDED…EDDE). Basic residues predominate over residues 399-414 (QKRKKRRKGKGGKQAK).

Belongs to the WD repeat WDR55 family.

The protein localises to the nucleus. It localises to the nucleolus. The polypeptide is WD repeat-containing protein JIP5 (JIP5) (Phaeosphaeria nodorum (strain SN15 / ATCC MYA-4574 / FGSC 10173) (Glume blotch fungus)).